The following is a 69-amino-acid chain: UPF0291 protein CD630_10710 (69 aa).

The protein belongs to the UPF0291 family.

It localises to the cytoplasm. In Clostridioides difficile (strain 630) (Peptoclostridium difficile), this protein is UPF0291 protein CD630_10710.